Consider the following 365-residue polypeptide: Protein RecA (365 aa).

81–88 (GPESSGKT) lines the ATP pocket.

This sequence belongs to the RecA family.

It is found in the cytoplasm. Functionally, can catalyze the hydrolysis of ATP in the presence of single-stranded DNA, the ATP-dependent uptake of single-stranded DNA by duplex DNA, and the ATP-dependent hybridization of homologous single-stranded DNAs. It interacts with LexA causing its activation and leading to its autocatalytic cleavage. The chain is Protein RecA from Borreliella burgdorferi (strain ATCC 35210 / DSM 4680 / CIP 102532 / B31) (Borrelia burgdorferi).